Reading from the N-terminus, the 516-residue chain is Maturase K (516 aa).

This sequence belongs to the intron maturase 2 family. MatK subfamily.

It localises to the plastid. The protein resides in the chloroplast. In terms of biological role, usually encoded in the trnK tRNA gene intron. Probably assists in splicing its own and other chloroplast group II introns. In Chara vulgaris (Common stonewort), this protein is Maturase K.